A 352-amino-acid chain; its full sequence is Histidinol-phosphate aminotransferase (352 aa).

K210 is modified (N6-(pyridoxal phosphate)lysine).

The protein belongs to the class-II pyridoxal-phosphate-dependent aminotransferase family. Histidinol-phosphate aminotransferase subfamily. As to quaternary structure, homodimer. Requires pyridoxal 5'-phosphate as cofactor.

The enzyme catalyses L-histidinol phosphate + 2-oxoglutarate = 3-(imidazol-4-yl)-2-oxopropyl phosphate + L-glutamate. Its pathway is amino-acid biosynthesis; L-histidine biosynthesis; L-histidine from 5-phospho-alpha-D-ribose 1-diphosphate: step 7/9. This is Histidinol-phosphate aminotransferase from Clostridium acetobutylicum (strain ATCC 824 / DSM 792 / JCM 1419 / IAM 19013 / LMG 5710 / NBRC 13948 / NRRL B-527 / VKM B-1787 / 2291 / W).